The chain runs to 423 residues: Serine hydroxymethyltransferase (423 aa).

(6S)-5,6,7,8-tetrahydrofolate is bound by residues Leu120 and 124-126; that span reads GHL. The residue at position 229 (Lys229) is an N6-(pyridoxal phosphate)lysine. 353–355 is a binding site for (6S)-5,6,7,8-tetrahydrofolate; sequence SPF.

Belongs to the SHMT family. As to quaternary structure, homodimer. The cofactor is pyridoxal 5'-phosphate.

The protein resides in the cytoplasm. The enzyme catalyses (6R)-5,10-methylene-5,6,7,8-tetrahydrofolate + glycine + H2O = (6S)-5,6,7,8-tetrahydrofolate + L-serine. It participates in one-carbon metabolism; tetrahydrofolate interconversion. The protein operates within amino-acid biosynthesis; glycine biosynthesis; glycine from L-serine: step 1/1. Catalyzes the reversible interconversion of serine and glycine with tetrahydrofolate (THF) serving as the one-carbon carrier. This reaction serves as the major source of one-carbon groups required for the biosynthesis of purines, thymidylate, methionine, and other important biomolecules. Also exhibits THF-independent aldolase activity toward beta-hydroxyamino acids, producing glycine and aldehydes, via a retro-aldol mechanism. This Synechococcus sp. (strain RCC307) protein is Serine hydroxymethyltransferase.